A 106-amino-acid polypeptide reads, in one-letter code: NADH-quinone oxidoreductase subunit K (106 aa).

3 helical membrane passes run 8–28 (IGIE…VFGV), 35–55 (IIVF…FVAF), and 66–86 (VFVF…LAIL).

Belongs to the complex I subunit 4L family. NDH-1 is composed of 14 different subunits. Subunits NuoA, H, J, K, L, M, N constitute the membrane sector of the complex.

The protein resides in the cell inner membrane. It catalyses the reaction a quinone + NADH + 5 H(+)(in) = a quinol + NAD(+) + 4 H(+)(out). Functionally, NDH-1 shuttles electrons from NADH, via FMN and iron-sulfur (Fe-S) centers, to quinones in the respiratory chain. The immediate electron acceptor for the enzyme in this species is believed to be a menaquinone. Couples the redox reaction to proton translocation (for every two electrons transferred, four hydrogen ions are translocated across the cytoplasmic membrane), and thus conserves the redox energy in a proton gradient. The chain is NADH-quinone oxidoreductase subunit K from Flavobacterium johnsoniae (strain ATCC 17061 / DSM 2064 / JCM 8514 / BCRC 14874 / CCUG 350202 / NBRC 14942 / NCIMB 11054 / UW101) (Cytophaga johnsonae).